The sequence spans 183 residues: Adenine phosphoribosyltransferase (183 aa).

The protein belongs to the purine/pyrimidine phosphoribosyltransferase family. Homodimer.

The protein resides in the cytoplasm. The catalysed reaction is AMP + diphosphate = 5-phospho-alpha-D-ribose 1-diphosphate + adenine. The protein operates within purine metabolism; AMP biosynthesis via salvage pathway; AMP from adenine: step 1/1. In terms of biological role, catalyzes a salvage reaction resulting in the formation of AMP, that is energically less costly than de novo synthesis. In Photorhabdus laumondii subsp. laumondii (strain DSM 15139 / CIP 105565 / TT01) (Photorhabdus luminescens subsp. laumondii), this protein is Adenine phosphoribosyltransferase.